A 553-amino-acid chain; its full sequence is MGPRPSTKNPTPMMLTVRVALVLSCICPANSIDGRPLAAAGIVVTGDKAVNIYTSSQTGSIIVKLLPNLPKDKEACAKAPLDAYNRTLTTLLTPLGDSIRRIQESVTTSGGRRQKRFIGAIIGGVALGVATAAQITAAAALIQAKQNAANILRLKESIAATNEAVHEVTDGLSQLAVAVGKMQQFVNDQFNKTAQESGCIRIAQQVGVELNLYLTELTTVFGPQITSPALNKLTIQALYNLAGGNMDYLLTKLGVGNNQLSSLIGSGLITGNPILYDSQTQLLGIQVTLPSVGNLNNMRATYLETLSVSTTRGFASALVPKVVTQVGSVIEELDTSYCIETDLDLYCTRIVTFPMSPGIYSCLSGNTSACMYSKTEGALTTPYMTIKGSVIANCKMTTCRCVNPPGIISQNYGEAVSLIDKQSCNVLSLDGITLRLSGEFDATYQKNISIQDSQVIITGNLDISTELGNVNNSISNALNKLEESNSKLDKVNVKLTSTSALITYIVLTIISLVFGILSLVLACYLMYKQKAQQKTLLWLGNNTLDQMRATTKM.

The first 31 residues, 1-31 (MGPRPSTKNPTPMMLTVRVALVLSCICPANS), serve as a signal peptide directing secretion. The Extracellular portion of the chain corresponds to 32-500 (IDGRPLAAAG…VNVKLTSTSA (469 aa)). 3 disulfide bridges follow: Cys-76-Cys-199, Cys-338-Cys-347, and Cys-362-Cys-370. A glycan (N-linked (GlcNAc...) asparagine; by host) is linked at Asn-85. The fusion peptide stretch occupies residues 117 to 141 (FIGAIIGGVALGVATAAQITAAAAL). Residues 142-170 (IQAKQNAANILRLKESIAATNEAVHEVTD) adopt a coiled-coil conformation. Asn-191 is a glycosylation site (N-linked (GlcNAc...) asparagine; by host). N-linked (GlcNAc...) asparagine; by host glycosylation is found at Asn-366, Asn-447, and Asn-471. Residues 466-491 (ELGNVNNSISNALNKLEESNSKLDKV) adopt a coiled-coil conformation. The chain crosses the membrane as a helical span at residues 501–521 (LITYIVLTIISLVFGILSLVL). Over 522–553 (ACYLMYKQKAQQKTLLWLGNNTLDQMRATTKM) the chain is Cytoplasmic. The S-palmitoyl cysteine; by host moiety is linked to residue Cys-523.

It belongs to the paramyxoviruses fusion glycoprotein family. In terms of assembly, homotrimer of disulfide-linked F1-F2. Post-translationally, the inactive precursor F0 is glycosylated and proteolytically cleaved into F1 and F2 to be functionally active. The cleavage is mediated by cellular proteases during the transport and maturation of the polypeptide.

It is found in the virion membrane. It localises to the host cell membrane. Class I viral fusion protein. Under the current model, the protein has at least 3 conformational states: pre-fusion native state, pre-hairpin intermediate state, and post-fusion hairpin state. During viral and plasma cell membrane fusion, the heptad repeat (HR) regions assume a trimer-of-hairpins structure, positioning the fusion peptide in close proximity to the C-terminal region of the ectodomain. The formation of this structure appears to drive apposition and subsequent fusion of viral and plasma cell membranes. Directs fusion of viral and cellular membranes leading to delivery of the nucleocapsid into the cytoplasm. This fusion is pH independent and occurs directly at the outer cell membrane. The trimer of F1-F2 (F protein) probably interacts with HN at the virion surface. Upon HN binding to its cellular receptor, the hydrophobic fusion peptide is unmasked and interacts with the cellular membrane, inducing the fusion between cell and virion membranes. Later in infection, F proteins expressed at the plasma membrane of infected cells could mediate fusion with adjacent cells to form syncytia, a cytopathic effect that could lead to tissue necrosis. The polypeptide is Fusion glycoprotein F0 (F) (Gallus gallus (Chicken)).